The primary structure comprises 406 residues: MTFSVDKVRADFPVLSREVNGLPLAYLDSAASAQKPSQVIDSEAEFYRHGYAAVHRGIHTLSAQATEKMENVRKRASLFINARSAEELVFVRGTTEGINLVANSWGNSNVRAGDNIIISQMEHHANIVPWQMLCARVGAELRVIPLNPDGTLQLETLPNLFDEKTRLLAITHVSNVLGTENPLAEMITLAHQHGAKVLVDGAQAVMHHPVDVQALDCDFYVFSGHKLYGPTGIGILYVKEALLQEMPPWEGGGSMIATVSLSEGTTWTKAPWRFEAGTPNTGGIIGLGAALEYVSALGLNNIAEYEQNLMHYALSQLESVPDLTLYGPRNRLGVIAFNLGKHHAYDVGSFLDNYGIAVRTGHHCAMPLMAYYNVPAMCRASLAMYNTHEEVDRLVTGLQRIHRLLG.

At Lys-226 the chain carries N6-(pyridoxal phosphate)lysine. Residue Cys-364 is the Cysteine persulfide intermediate of the active site.

It belongs to the class-V pyridoxal-phosphate-dependent aminotransferase family. Csd subfamily. As to quaternary structure, homodimer. Interacts with SufE and the SufBCD complex composed of SufB, SufC and SufD. The interaction with SufE is required to mediate the direct transfer of the sulfur atom from the S-sulfanylcysteine. Requires pyridoxal 5'-phosphate as cofactor.

The protein localises to the cytoplasm. The enzyme catalyses (sulfur carrier)-H + L-cysteine = (sulfur carrier)-SH + L-alanine. It carries out the reaction L-selenocysteine + AH2 = hydrogenselenide + L-alanine + A + H(+). The protein operates within cofactor biosynthesis; iron-sulfur cluster biosynthesis. Its function is as follows. Cysteine desulfurases mobilize the sulfur from L-cysteine to yield L-alanine, an essential step in sulfur metabolism for biosynthesis of a variety of sulfur-containing biomolecules. Component of the suf operon, which is activated and required under specific conditions such as oxidative stress and iron limitation. Acts as a potent selenocysteine lyase in vitro, that mobilizes selenium from L-selenocysteine. Selenocysteine lyase activity is however unsure in vivo. The chain is Cysteine desulfurase from Escherichia coli O8 (strain IAI1).